Here is a 258-residue protein sequence, read N- to C-terminus: Imidazole glycerol phosphate synthase subunit HisF (258 aa).

Residues Asp-11 and Asp-130 contribute to the active site.

The protein belongs to the HisA/HisF family. As to quaternary structure, heterodimer of HisH and HisF.

It localises to the cytoplasm. The enzyme catalyses 5-[(5-phospho-1-deoxy-D-ribulos-1-ylimino)methylamino]-1-(5-phospho-beta-D-ribosyl)imidazole-4-carboxamide + L-glutamine = D-erythro-1-(imidazol-4-yl)glycerol 3-phosphate + 5-amino-1-(5-phospho-beta-D-ribosyl)imidazole-4-carboxamide + L-glutamate + H(+). It participates in amino-acid biosynthesis; L-histidine biosynthesis; L-histidine from 5-phospho-alpha-D-ribose 1-diphosphate: step 5/9. Its function is as follows. IGPS catalyzes the conversion of PRFAR and glutamine to IGP, AICAR and glutamate. The HisF subunit catalyzes the cyclization activity that produces IGP and AICAR from PRFAR using the ammonia provided by the HisH subunit. This chain is Imidazole glycerol phosphate synthase subunit HisF, found in Stenotrophomonas maltophilia (strain K279a).